The following is a 253-amino-acid chain: Protein phosphatase CheZ (253 aa).

Residues 1–84 (MTQEELDALM…EWPPPPPTEE (84 aa)) are disordered. The segment covering 21-69 (LETKEETKEEAKEEAKEEAKEEAKEKEEIKEESSSQKMTVKKEDAEKYG) has biased composition (basic and acidic residues).

It belongs to the CheZ family. As to quaternary structure, interacts with ChePep; this interaction is essential for each other polar localization.

Its subcellular location is the cytoplasm. Functionally, plays an important role in bacterial chemotaxis signal transduction pathway by accelerating the dephosphorylation of phosphorylated CheY (CheY-P). Also dephosphorylates CheV2 but not CheV1 or CheV3. In addition, forms a distinct chemotaxis regulatory complex with ChePep independently of the core chemotaxis signaling proteins. The sequence is that of Protein phosphatase CheZ from Helicobacter pylori (strain ATCC 700392 / 26695) (Campylobacter pylori).